A 569-amino-acid chain; its full sequence is Pyruvate decarboxylase (569 aa).

Pyruvate-binding residues include Asp38 and His124. Thiamine diphosphate contacts are provided by residues Thr398 and 421-423; that span reads GSI. A Mg(2+)-binding site is contributed by Asp451. Residues 452–453 and 478–483 each bind thiamine diphosphate; these read GS and NQGYTI. 2 residues coordinate Mg(2+): Asn478 and Gly480. Position 484 (Glu484) interacts with pyruvate.

The protein belongs to the TPP enzyme family. In terms of assembly, homotetramer. It depends on Mg(2+) as a cofactor. Thiamine diphosphate is required as a cofactor.

The enzyme catalyses a 2-oxocarboxylate + H(+) = an aldehyde + CO2. It carries out the reaction pyruvate + H(+) = acetaldehyde + CO2. This is Pyruvate decarboxylase (pdcA) from Aspergillus terreus (strain NIH 2624 / FGSC A1156).